We begin with the raw amino-acid sequence, 64 residues long: Large ribosomal subunit protein uL30 (64 aa).

This sequence belongs to the universal ribosomal protein uL30 family. In terms of assembly, part of the 50S ribosomal subunit.

This Rhodopseudomonas palustris (strain BisA53) protein is Large ribosomal subunit protein uL30.